Here is a 570-residue protein sequence, read N- to C-terminus: MGDNLVYAVRSSEGFYLKRGLGKDAVTVFEQNKTSRDVACNVFAYSNNGQLFAYCDNQVTRVFEIATNKEILCVELKRTRKILFSPKDNFLLTFEPWAVYGPKTAENQKPEPNVRVYSLADGKHVSTFSAPKEASWEPQFSDDESLAARMVGSEVFFYTNMSFDRYDHKLVEKGATNFALSPGPAPNHVAVYVPAVGSTPARVRVHRVSESFPVVGNRTFFKSDKAVMTWNQRGQSLLILASVEVDKTNQSYYGEQSLYLINIQSGESVVVPLEKKGPIYAAKWNPNGREFAVCYGYMPAKVTFYNPRGVPIFDTIEGPRNDVFYNAFGNIVLICGFGNIAKGKMEFWDVETKKEIISIEVPNTTLFDWAPDGQHFVTCTTAPRLRIDNSYRFWHYTGRMLAETHFESPKELWEVRWRPMTGYNKFAIKELTKTDKMAAGLPIRKKDASHPLNNVPAGAVRQAGAYIPPHLRKPLGGGGSAGPPSAAAPTPGNQNQRPAQPRANGNGNAPQPFRPQQSEQERKAFQLKKKVEEIKVLKQRVANGDQLQPNQMEKIQRENEYLSELSKLTI.

WD repeat units lie at residues 274–316 (EKKG…FDTI) and 318–358 (GPRN…EIIS). Residues 468–526 (PPHLRKPLGGGGSAGPPSAAAPTPGNQNQRPAQPRANGNGNAPQPFRPQQSEQERKAFQ) form a disordered region. Residues 482–492 (GPPSAAAPTPG) show a composition bias toward low complexity. Over residues 493-518 (NQNQRPAQPRANGNGNAPQPFRPQQS) the composition is skewed to polar residues. A coiled-coil region spans residues 519–541 (EQERKAFQLKKKVEEIKVLKQRV).

It belongs to the WD repeat EIF2A family.

In terms of biological role, functions in the early steps of protein synthesis of a small number of specific mRNAs. Acts by directing the binding of methionyl-tRNAi to 40S ribosomal subunits. In contrast to the eIF-2 complex, it binds methionyl-tRNAi to 40S subunits in a codon-dependent manner, whereas the eIF-2 complex binds methionyl-tRNAi to 40S subunits in a GTP-dependent manner. This Caenorhabditis elegans protein is Eukaryotic translation initiation factor 2A.